Here is a 626-residue protein sequence, read N- to C-terminus: MGRAVGIDLGTTNSCIATLEGGQPTVIVNAEGARTTPSVVAFSKSGEILVGEVAKRQAVTNVDRTISSVKRHMGTDWTVEIDGKKWTPQEISAQVLMKLKRDAEAYLGEPVTDAVITCPAYFNDAQRQATKDAGTIAGLNVLRIINEPTAAALAYGLEKGKEDERILVFDLGGGTFDVSLLEIGKDDDGFSTIQVQATNGDNHLGGDDWDQKIIDWLVGEVKNKYGVDLSKDKIALQRLKEAAEQAKKELSSSTSTSISMQYLAMTPDGTPVHLDETLTRAHFEEMTSDLLGRCRTPFNNVLRDAGIGVSDIDHVVLVGGSTRMPAVKELVKELTGGKEANQSVNPDEVVAVGAAVQSGVIKGDRKDVLLIDVTPLSLGIETKGGIMTKLIERNTAIPTKRSEVFSTAEDNQPSVLIQVYQGEREFARDNKPLGTFELTGIAPAPRGVPQIEVTFDIDANGIVHVSAKDKGTGKEQSMTITGGSGLPKDEIDRMVKEAEAHEAEDKKRKEDAETRNQAESFAYQTEKLVNDNKDKLSDDVAKEVTDKVNELKEALKGEDIEKIKSAQTELMTSAQKIGQALYAQQGAADAAGAAGAAGAGAAGSASNGSDDDVVDAEVVDDDKDNK.

Thr-175 is modified (phosphothreonine; by autocatalysis). Disordered stretches follow at residues 469–488 (DKGT…GLPK), 498–517 (AEAH…TRNQ), and 583–626 (AQQG…KDNK). The segment covering 498–516 (AEAHEAEDKKRKEDAETRN) has biased composition (basic and acidic residues). A compositionally biased stretch (acidic residues) spans 609–626 (SDDDVVDAEVVDDDKDNK).

The protein belongs to the heat shock protein 70 family.

Acts as a chaperone. The protein is Chaperone protein DnaK of Bifidobacterium adolescentis (strain ATCC 15703 / DSM 20083 / NCTC 11814 / E194a).